Consider the following 211-residue polypeptide: Cyclin-dependent kinase inhibitor 3 (211 aa).

A disordered region spans residues 1–20; the sequence is MKPPISIQASEFDSSDEEPV. Positions 1–34 are interaction with CDK2; the sequence is MKPPISIQASEFDSSDEEPVDEEQTPIQISWLPL. The Tyrosine-protein phosphatase domain maps to 32–200; the sequence is LPLSRVNCSQ…FRDKLAAYLS (169 aa). C140 acts as the Phosphocysteine intermediate in catalysis.

This sequence belongs to the protein-tyrosine phosphatase family. In terms of assembly, interacts with cyclin-dependent kinases such as CDK1, CDK2 and CDK3. Does not interact with CDK4. Interacts (via C-terminus) with phosphorylated CDK2 (via C-terminal helix). Interacts with MS4A3 (via C-terminus); the interaction enhances CDKN3 enzymatic activity.

It localises to the cytoplasm. The protein resides in the perinuclear region. It catalyses the reaction O-phospho-L-tyrosyl-[protein] + H2O = L-tyrosyl-[protein] + phosphate. It carries out the reaction O-phospho-L-seryl-[protein] + H2O = L-seryl-[protein] + phosphate. The catalysed reaction is O-phospho-L-threonyl-[protein] + H2O = L-threonyl-[protein] + phosphate. Functionally, may play a role in cell cycle regulation. Dual specificity phosphatase active toward substrates containing either phosphotyrosine or phosphoserine residues. Dephosphorylates CDK2 at 'Thr-160' in a cyclin-dependent manner. The polypeptide is Cyclin-dependent kinase inhibitor 3 (Mus musculus (Mouse)).